Consider the following 272-residue polypeptide: Putative phosphoenolpyruvate synthase regulatory protein (272 aa).

152 to 159 (GVSRCGKT) contributes to the ADP binding site.

Belongs to the pyruvate, phosphate/water dikinase regulatory protein family. PSRP subfamily.

The enzyme catalyses [pyruvate, water dikinase] + ADP = [pyruvate, water dikinase]-phosphate + AMP + H(+). The catalysed reaction is [pyruvate, water dikinase]-phosphate + phosphate + H(+) = [pyruvate, water dikinase] + diphosphate. Functionally, bifunctional serine/threonine kinase and phosphorylase involved in the regulation of the phosphoenolpyruvate synthase (PEPS) by catalyzing its phosphorylation/dephosphorylation. In Pseudomonas fluorescens (strain SBW25), this protein is Putative phosphoenolpyruvate synthase regulatory protein.